A 325-amino-acid chain; its full sequence is GMP reductase (325 aa).

The active-site Thioimidate intermediate is the Cys-174. 203-226 is a binding site for NADP(+); it reads IIADGGLRTHGDIAKSIRFGATMV.

The protein belongs to the IMPDH/GMPR family. GuaC type 2 subfamily.

The enzyme catalyses IMP + NH4(+) + NADP(+) = GMP + NADPH + 2 H(+). Catalyzes the irreversible NADPH-dependent deamination of GMP to IMP. It functions in the conversion of nucleobase, nucleoside and nucleotide derivatives of G to A nucleotides, and in maintaining the intracellular balance of A and G nucleotides. The polypeptide is GMP reductase (Staphylococcus epidermidis (strain ATCC 35984 / DSM 28319 / BCRC 17069 / CCUG 31568 / BM 3577 / RP62A)).